The primary structure comprises 436 residues: Gamma-glutamyl phosphate reductase (436 aa).

The protein belongs to the gamma-glutamyl phosphate reductase family.

Its subcellular location is the cytoplasm. It catalyses the reaction L-glutamate 5-semialdehyde + phosphate + NADP(+) = L-glutamyl 5-phosphate + NADPH + H(+). It functions in the pathway amino-acid biosynthesis; L-proline biosynthesis; L-glutamate 5-semialdehyde from L-glutamate: step 2/2. Functionally, catalyzes the NADPH-dependent reduction of L-glutamate 5-phosphate into L-glutamate 5-semialdehyde and phosphate. The product spontaneously undergoes cyclization to form 1-pyrroline-5-carboxylate. This chain is Gamma-glutamyl phosphate reductase, found in Polaromonas sp. (strain JS666 / ATCC BAA-500).